Consider the following 254-residue polypeptide: MLTIAGVEFESRLFTGTGKFSSSQLMLESIKASQSQLVTVAMKRIDLKTGADDLLSPLRQAGVRLLPNTSGARNAKEAIFAAELAREMLGTQWVKLEIHPDPKYLMPDAVETLAAAKTLCERGFIVMPYVHADPVLCRRLEEVGCAAVMPLASPIGTNQGLVTEPFIKMIIEQAKVPVVIDAGIGAPSHAAHAMELGADAVLVNTAIASSASPIEMALCFKDAVNCGRRAFEAGLGRVQTQAVHTSPLTGFLQQ.

The Schiff-base intermediate with DXP role is filled by Lys95. 1-deoxy-D-xylulose 5-phosphate-binding positions include Gly156, 182–183 (AG), and 204–205 (NT).

This sequence belongs to the ThiG family. As to quaternary structure, homotetramer. Forms heterodimers with either ThiH or ThiS.

The protein resides in the cytoplasm. The catalysed reaction is [ThiS sulfur-carrier protein]-C-terminal-Gly-aminoethanethioate + 2-iminoacetate + 1-deoxy-D-xylulose 5-phosphate = [ThiS sulfur-carrier protein]-C-terminal Gly-Gly + 2-[(2R,5Z)-2-carboxy-4-methylthiazol-5(2H)-ylidene]ethyl phosphate + 2 H2O + H(+). The protein operates within cofactor biosynthesis; thiamine diphosphate biosynthesis. In terms of biological role, catalyzes the rearrangement of 1-deoxy-D-xylulose 5-phosphate (DXP) to produce the thiazole phosphate moiety of thiamine. Sulfur is provided by the thiocarboxylate moiety of the carrier protein ThiS. In vitro, sulfur can be provided by H(2)S. The polypeptide is Thiazole synthase (Shewanella sp. (strain MR-7)).